Consider the following 587-residue polypeptide: RuBisCO large subunit-binding protein subunit alpha, chloroplastic (587 aa).

A compositionally biased stretch (polar residues) spans Met-1–Ser-25. A disordered region spans residues Met-1–Arg-33. A chloroplast-targeting transit peptide spans Met-1–Ala-47.

It belongs to the chaperonin (HSP60) family. As to quaternary structure, oligomer of probably six alpha and six beta subunits.

It is found in the plastid. The protein localises to the chloroplast. Functionally, this protein binds RuBisCO small and large subunits and is implicated in the assembly of the enzyme oligomer. The sequence is that of RuBisCO large subunit-binding protein subunit alpha, chloroplastic from Pisum sativum (Garden pea).